The sequence spans 378 residues: Lipid-A-disaccharide synthase (378 aa).

Belongs to the LpxB family.

It carries out the reaction a lipid X + a UDP-2-N,3-O-bis[(3R)-3-hydroxyacyl]-alpha-D-glucosamine = a lipid A disaccharide + UDP + H(+). It participates in bacterial outer membrane biogenesis; LPS lipid A biosynthesis. Condensation of UDP-2,3-diacylglucosamine and 2,3-diacylglucosamine-1-phosphate to form lipid A disaccharide, a precursor of lipid A, a phosphorylated glycolipid that anchors the lipopolysaccharide to the outer membrane of the cell. This is Lipid-A-disaccharide synthase from Methylobacillus flagellatus (strain ATCC 51484 / DSM 6875 / VKM B-1610 / KT).